Here is a 261-residue protein sequence, read N- to C-terminus: Cytosolic Fe-S cluster assembly factor Nubp2 homolog (261 aa).

G14–S21 contributes to the ATP binding site. 2 residues coordinate [4Fe-4S] cluster: C188 and C191.

Belongs to the Mrp/NBP35 ATP-binding proteins family. NUBP2/CFD1 subfamily. As to quaternary structure, heterotetramer of 2 Nubp1 and 2 Nubp2 chains. [4Fe-4S] cluster is required as a cofactor.

Its subcellular location is the cytoplasm. Its function is as follows. Component of the cytosolic iron-sulfur (Fe/S) protein assembly (CIA) machinery. Required for maturation of extramitochondrial Fe-S proteins. The Nubp1-Nubp2 heterotetramer forms a Fe-S scaffold complex, mediating the de novo assembly of an Fe-S cluster and its transfer to target apoproteins. The chain is Cytosolic Fe-S cluster assembly factor Nubp2 homolog from Drosophila ananassae (Fruit fly).